A 61-amino-acid chain; its full sequence is Large ribosomal subunit protein uL30 (61 aa).

The protein belongs to the universal ribosomal protein uL30 family. Part of the 50S ribosomal subunit.

The chain is Large ribosomal subunit protein uL30 from Lactobacillus delbrueckii subsp. bulgaricus (strain ATCC 11842 / DSM 20081 / BCRC 10696 / JCM 1002 / NBRC 13953 / NCIMB 11778 / NCTC 12712 / WDCM 00102 / Lb 14).